A 156-amino-acid polypeptide reads, in one-letter code: ATP synthase subunit b (156 aa).

The chain crosses the membrane as a helical span at residues 7-26 (LIGQLIAFALFVAFCMKYVW).

This sequence belongs to the ATPase B chain family. As to quaternary structure, F-type ATPases have 2 components, F(1) - the catalytic core - and F(0) - the membrane proton channel. F(1) has five subunits: alpha(3), beta(3), gamma(1), delta(1), epsilon(1). F(0) has three main subunits: a(1), b(2) and c(10-14). The alpha and beta chains form an alternating ring which encloses part of the gamma chain. F(1) is attached to F(0) by a central stalk formed by the gamma and epsilon chains, while a peripheral stalk is formed by the delta and b chains.

The protein resides in the cell inner membrane. Functionally, f(1)F(0) ATP synthase produces ATP from ADP in the presence of a proton or sodium gradient. F-type ATPases consist of two structural domains, F(1) containing the extramembraneous catalytic core and F(0) containing the membrane proton channel, linked together by a central stalk and a peripheral stalk. During catalysis, ATP synthesis in the catalytic domain of F(1) is coupled via a rotary mechanism of the central stalk subunits to proton translocation. In terms of biological role, component of the F(0) channel, it forms part of the peripheral stalk, linking F(1) to F(0). This Haemophilus ducreyi (strain 35000HP / ATCC 700724) protein is ATP synthase subunit b.